The chain runs to 345 residues: uncharacterized protein (345 aa).

Position 1 (Met1) is a domain, TBDR plug. In terms of domain architecture, TBDR beta-barrel spans 1-345 (MDLGPIYNTR…EVILNTKIEF (345 aa)). The TonB C-terminal box motif lies at 328–345 (PVALGYAREVILNTKIEF).

The protein belongs to the TonB-dependent receptor family.

It localises to the cell outer membrane. This is an uncharacterized protein from Haemophilus influenzae (strain ATCC 51907 / DSM 11121 / KW20 / Rd).